The sequence spans 265 residues: MSASCFCNKKNDQISKLDDSLLDANDPNHPANLICELCRLFYDNNWVTGTGGGISIRDVKGENPNLVYIAPSGIQKEKLQPWEMFVVELPDEKLLRTPNDCPAELTKSYKYKPSACTPLFMSCYTMRDAGACIHTHSQNAVMCSLLWGDKVEFEISHIEQIKALPKLAVNEKTGKVEKVGSMQYFDKLVLPIIENTPHEEDLTDSLQEAIKNYPGTTAVLVRRHGIYVWGEDVWKAKVYNEALDYLLELAVKMKQSGIPTTTQTD.

Cys-116 contacts substrate. The Zn(2+) site is built by His-134 and His-136. Glu-159 functions as the Proton donor/acceptor in the catalytic mechanism. His-224 lines the Zn(2+) pocket.

It belongs to the aldolase class II family. MtnB subfamily. It depends on Zn(2+) as a cofactor.

It localises to the cytoplasm. The catalysed reaction is 5-(methylsulfanyl)-D-ribulose 1-phosphate = 5-methylsulfanyl-2,3-dioxopentyl phosphate + H2O. It participates in amino-acid biosynthesis; L-methionine biosynthesis via salvage pathway; L-methionine from S-methyl-5-thio-alpha-D-ribose 1-phosphate: step 2/6. Its function is as follows. Catalyzes the dehydration of methylthioribulose-1-phosphate (MTRu-1-P) into 2,3-diketo-5-methylthiopentyl-1-phosphate (DK-MTP-1-P). The chain is Methylthioribulose-1-phosphate dehydratase from Debaryomyces hansenii (strain ATCC 36239 / CBS 767 / BCRC 21394 / JCM 1990 / NBRC 0083 / IGC 2968) (Yeast).